Reading from the N-terminus, the 641-residue chain is UvrABC system protein C (641 aa).

The GIY-YIG domain maps to 16–95; that stretch reads ESPGVYRFWD…IKQYEPRFNI (80 aa). The UVR domain maps to 208-243; sequence TEYLRRLEKDMRAAAAAEDFERAARLRDDAAALRLA.

The protein belongs to the UvrC family. In terms of assembly, interacts with UvrB in an incision complex.

It localises to the cytoplasm. In terms of biological role, the UvrABC repair system catalyzes the recognition and processing of DNA lesions. UvrC both incises the 5' and 3' sides of the lesion. The N-terminal half is responsible for the 3' incision and the C-terminal half is responsible for the 5' incision. In Acidothermus cellulolyticus (strain ATCC 43068 / DSM 8971 / 11B), this protein is UvrABC system protein C.